The sequence spans 159 residues: Antitoxin Xre (159 aa).

Belongs to the MbcA/ParS/Xre antitoxin family. In terms of assembly, homodimer. Forms a complex with cognate toxin Res; the 2 toxin molecules dimerize and each contacts an Xre homodimer. Most Res-Xre contacts are between the antitoxin molecule closest to the toxin.

Probable antitoxin component of a type II toxin-antitoxin (TA) system. In vivo probably neutralizes the toxic effect of cognate toxin Res. The sequence is that of Antitoxin Xre from Pseudomonas putida (strain ATCC 47054 / DSM 6125 / CFBP 8728 / NCIMB 11950 / KT2440).